A 346-amino-acid chain; its full sequence is Haptoglobin (346 aa).

The signal sequence occupies residues 1–18 (MRALGAVVTLLLWGQLFA). Residues 31–87 (DSCPKPPEIENGYVEHLVRYRCQHYRLRTEGDGVYTLNSEKQWVNTAAGERLPECEA) enclose the Sushi domain. 4 disulfides stabilise this stretch: Cys-52/Cys-85, Cys-89/Cys-206, Cys-249/Cys-280, and Cys-291/Cys-321. The region spanning 102-344 (IIGGSLDAKG…FLDWIQETMA (243 aa)) is the Peptidase S1 domain. Residues Asn-147 and Asn-181 are each glycosylated (N-linked (GlcNAc...) asparagine). The segment at 258–263 (VPEKEG) is interaction with CD163.

Belongs to the peptidase S1 family. In terms of assembly, tetramer of two alpha and two beta chains; disulfide-linked. The hemoglobin/haptoglobin complex is composed of a haptoglobin dimer bound to two hemoglobin alpha-beta dimers. Interacts with CD163. Interacts with ERGIC3. As to expression, expressed by the liver and secreted in plasma.

The protein localises to the secreted. Functionally, as a result of hemolysis, hemoglobin is found to accumulate in the kidney and is secreted in the urine. Haptoglobin captures, and combines with free plasma hemoglobin to allow hepatic recycling of heme iron and to prevent kidney damage. Haptoglobin also acts as an antioxidant, has antibacterial activity and plays a role in modulating many aspects of the acute phase response. Hemoglobin/haptoglobin complexes are rapidly cleared by the macrophage CD163 scavenger receptor expressed on the surface of liver Kupfer cells through an endocytic lysosomal degradation pathway. The chain is Haptoglobin (HP) from Mesocricetus auratus (Golden hamster).